Consider the following 49-residue polypeptide: Light-harvesting protein B800/850/890 alpha-3 chain (49 aa).

Over 1–14 the chain is Cytoplasmic; it reads MNQARIWLVVKPSV. The helical transmembrane segment at 15-35 threads the bilayer; the sequence is GLPLLLGVVLLIALLVHGAIL. His31 contacts a bacteriochlorophyll. At 36–49 the chain is on the periplasmic side; that stretch reads TNTSWYPTYFEGNW.

It belongs to the antenna complex alpha subunit family. In terms of assembly, the core complex is formed by different alpha and beta chains, binding bacteriochlorophyll molecules, and arranged most probably in tetrameric structures disposed around the reaction center. The non-pigmented gamma chains may constitute additional components.

It is found in the cell inner membrane. Antenna complexes are light-harvesting systems, which transfer the excitation energy to the reaction centers. This Halorhodospira halophila (strain DSM 244 / SL1) (Ectothiorhodospira halophila (strain DSM 244 / SL1)) protein is Light-harvesting protein B800/850/890 alpha-3 chain.